Consider the following 176-residue polypeptide: Neuropeptide-like protein 1 (176 aa).

A signal peptide spans 1 to 19 (MKATFVLACLLVIAAVSHA). Residues 59 to 79 (GKRSAEQNEQANKEDKATSDK) are disordered. A compositionally biased stretch (basic and acidic residues) spans 61 to 79 (RSAEQNEQANKEDKATSDK).

In terms of biological role, in AWC olfactory sensory neurons, required for the detection of preferred food sources. The chain is Neuropeptide-like protein 1 (nlp-1) from Caenorhabditis elegans.